Here is a 241-residue protein sequence, read N- to C-terminus: Methylthioribulose-1-phosphate dehydratase (241 aa).

The span at 1–12 (MSQEITQKDNND) shows a compositional bias: basic and acidic residues. A disordered region spans residues 1 to 22 (MSQEITQKDNNDHLVQSSDPDH). C101 serves as a coordination point for substrate. H118 and H120 together coordinate Zn(2+). Residue E147 is the Proton donor/acceptor of the active site. H203 is a binding site for Zn(2+).

This sequence belongs to the aldolase class II family. MtnB subfamily. Zn(2+) serves as cofactor.

It is found in the cytoplasm. It catalyses the reaction 5-(methylsulfanyl)-D-ribulose 1-phosphate = 5-methylsulfanyl-2,3-dioxopentyl phosphate + H2O. Its pathway is amino-acid biosynthesis; L-methionine biosynthesis via salvage pathway; L-methionine from S-methyl-5-thio-alpha-D-ribose 1-phosphate: step 2/6. Catalyzes the dehydration of methylthioribulose-1-phosphate (MTRu-1-P) into 2,3-diketo-5-methylthiopentyl-1-phosphate (DK-MTP-1-P). This chain is Methylthioribulose-1-phosphate dehydratase, found in Aspergillus terreus (strain NIH 2624 / FGSC A1156).